A 252-amino-acid polypeptide reads, in one-letter code: LexA repressor (252 aa).

The segment at 1-46 (MPEENRGGHQPYTEESSVSALHPVRTDDSVGSSAEQTGDAPTLTER) is disordered. Residues 67–87 (IREIGEAVGLSSPSSVAHQLK) constitute a DNA-binding region (H-T-H motif). Catalysis depends on for autocatalytic cleavage activity residues Ser-176 and Lys-213.

The protein belongs to the peptidase S24 family. In terms of assembly, homodimer.

The catalysed reaction is Hydrolysis of Ala-|-Gly bond in repressor LexA.. Represses a number of genes involved in the response to DNA damage (SOS response), including recA and lexA. In the presence of single-stranded DNA, RecA interacts with LexA causing an autocatalytic cleavage which disrupts the DNA-binding part of LexA, leading to derepression of the SOS regulon and eventually DNA repair. The protein is LexA repressor of Thermobifida fusca (strain YX).